Here is a 273-residue protein sequence, read N- to C-terminus: Putative pyruvate, phosphate dikinase regulatory protein (273 aa).

153–160 (GVSRTSKS) lines the ADP pocket.

The protein belongs to the pyruvate, phosphate/water dikinase regulatory protein family. PDRP subfamily.

The enzyme catalyses N(tele)-phospho-L-histidyl/L-threonyl-[pyruvate, phosphate dikinase] + ADP = N(tele)-phospho-L-histidyl/O-phospho-L-threonyl-[pyruvate, phosphate dikinase] + AMP + H(+). It carries out the reaction N(tele)-phospho-L-histidyl/O-phospho-L-threonyl-[pyruvate, phosphate dikinase] + phosphate + H(+) = N(tele)-phospho-L-histidyl/L-threonyl-[pyruvate, phosphate dikinase] + diphosphate. Bifunctional serine/threonine kinase and phosphorylase involved in the regulation of the pyruvate, phosphate dikinase (PPDK) by catalyzing its phosphorylation/dephosphorylation. This Ehrlichia ruminantium (strain Gardel) protein is Putative pyruvate, phosphate dikinase regulatory protein.